A 412-amino-acid chain; its full sequence is Maintenance of mitochondrial morphology protein 1 (412 aa).

At 1-81 (MTKELIKTEA…PANNWTFTQG (81 aa)) the chain is on the lumenal side. Residues 82-102 (LVLGQISVIFIIIVFVKFFVF) traverse the membrane as a helical segment. Residues 103 to 412 (ADSSTIPTKK…RSDSGTSENL (310 aa)) lie on the Cytoplasmic side of the membrane. In terms of domain architecture, SMP-LTD spans 165 to 382 (SPESLDWFNV…EPRFQVVRLP (218 aa)). Positions 389–412 (KNTREPINKKTSVSRSDSGTSENL) are disordered. Residues 397–412 (KKTSVSRSDSGTSENL) show a composition bias toward polar residues.

The protein belongs to the MMM1 family. In terms of assembly, homodimer. Component of the ER-mitochondria encounter structure (ERMES) or MDM complex, composed of MMM1, MDM10, MDM12 and MDM34. An MMM1 homodimer associates with one molecule of MDM12 on each side in a pairwise head-to-tail manner, and the SMP-LTD domains of MMM1 and MDM12 generate a continuous hydrophobic tunnel for phospholipid trafficking.

The protein localises to the endoplasmic reticulum membrane. Its function is as follows. Component of the ERMES/MDM complex, which serves as a molecular tether to connect the endoplasmic reticulum (ER) and mitochondria. Components of this complex are involved in the control of mitochondrial shape and protein biogenesis, and function in nonvesicular lipid trafficking between the ER and mitochondria. The MDM12-MMM1 subcomplex functions in the major beta-barrel assembly pathway that is responsible for biogenesis of all outer membrane beta-barrel proteins, and acts in a late step after the SAM complex. The MDM10-MDM12-MMM1 subcomplex further acts in the TOM40-specific pathway after the action of the MDM12-MMM1 complex. Essential for establishing and maintaining the structure of mitochondria and maintenance of mtDNA nucleoids. The sequence is that of Maintenance of mitochondrial morphology protein 1 from Candida tropicalis (strain ATCC MYA-3404 / T1) (Yeast).